The chain runs to 197 residues: Xanthine phosphoribosyltransferase (197 aa).

Positions 20 and 27 each coordinate xanthine. 128–132 (ANGQA) serves as a coordination point for 5-phospho-alpha-D-ribose 1-diphosphate. Lysine 156 lines the xanthine pocket.

The protein belongs to the purine/pyrimidine phosphoribosyltransferase family. Xpt subfamily. In terms of assembly, homodimer.

Its subcellular location is the cytoplasm. It catalyses the reaction XMP + diphosphate = xanthine + 5-phospho-alpha-D-ribose 1-diphosphate. It functions in the pathway purine metabolism; XMP biosynthesis via salvage pathway; XMP from xanthine: step 1/1. In terms of biological role, converts the preformed base xanthine, a product of nucleic acid breakdown, to xanthosine 5'-monophosphate (XMP), so it can be reused for RNA or DNA synthesis. In Lactococcus lactis subsp. cremoris (strain SK11), this protein is Xanthine phosphoribosyltransferase.